Here is a 99-residue protein sequence, read N- to C-terminus: Teretoxin Tsu6.4 (99 aa).

The first 21 residues, 1–21 (MRLLLILVLLTPVIVAFSVDE), serve as a signal peptide directing secretion. Residues 22–53 (ELNNADGANAASFTADQEVRHKRNLFPAIARR) constitute a propeptide that is removed on maturation.

In terms of processing, contains 3 disulfide bonds. Expressed by the venom duct.

The protein localises to the secreted. The protein is Teretoxin Tsu6.4 of Terebra subulata (Chocolate spotted auger).